A 188-amino-acid chain; its full sequence is Mitochondrial import receptor subunit TOM20 homolog (188 aa).

The Mitochondrial intermembrane portion of the chain corresponds to 1–12 (MTDTLFGFNKSN). The chain crosses the membrane as a helical span at residues 13–31 (VVLAAGVAGAAFLGYCIYF). The Cytoplasmic portion of the chain corresponds to 32–188 (DHKRINAPDY…ELIDDTDDLE (157 aa)). Disordered regions lie at residues 48 to 67 (KRRAQAGSGGMAARRPPAGG) and 155 to 188 (ADEAENEPPLVQYLGDGPPPAQIQELIDDTDDLE). A compositionally biased stretch (low complexity) spans 58-67 (MAARRPPAGG).

This sequence belongs to the Tom20 family. Forms part of the preprotein translocase complex of the outer mitochondrial membrane (TOM complex).

Its subcellular location is the mitochondrion outer membrane. In terms of biological role, central component of the receptor complex responsible for the recognition and translocation of cytosolically synthesized mitochondrial preproteins. Together with TOM22 functions as the transit peptide receptor at the surface of the mitochondrion outer membrane and facilitates the movement of preproteins into the translocation pore. This Caenorhabditis briggsae protein is Mitochondrial import receptor subunit TOM20 homolog (tomm-20).